The sequence spans 417 residues: Serine hydroxymethyltransferase (417 aa).

Residues L122 and 126–128 (GHL) each bind (6S)-5,6,7,8-tetrahydrofolate. K230 carries the post-translational modification N6-(pyridoxal phosphate)lysine. 355–357 (SPF) contributes to the (6S)-5,6,7,8-tetrahydrofolate binding site.

The protein belongs to the SHMT family. Homodimer. Pyridoxal 5'-phosphate serves as cofactor.

The protein resides in the cytoplasm. The enzyme catalyses (6R)-5,10-methylene-5,6,7,8-tetrahydrofolate + glycine + H2O = (6S)-5,6,7,8-tetrahydrofolate + L-serine. It functions in the pathway one-carbon metabolism; tetrahydrofolate interconversion. It participates in amino-acid biosynthesis; glycine biosynthesis; glycine from L-serine: step 1/1. In terms of biological role, catalyzes the reversible interconversion of serine and glycine with tetrahydrofolate (THF) serving as the one-carbon carrier. This reaction serves as the major source of one-carbon groups required for the biosynthesis of purines, thymidylate, methionine, and other important biomolecules. Also exhibits THF-independent aldolase activity toward beta-hydroxyamino acids, producing glycine and aldehydes, via a retro-aldol mechanism. This is Serine hydroxymethyltransferase from Francisella philomiragia subsp. philomiragia (strain ATCC 25017 / CCUG 19701 / FSC 153 / O#319-036).